The primary structure comprises 843 residues: Protein kintoun (843 aa).

Disordered regions lie at residues 212-242, 371-417, 545-672, and 761-843; these read PTAEQLEPHPLQNIYPTAPPTSNPEPRVHPM, FSRE…PVHS, YTVK…GASQ, and KKNQ…DDVM. Ser-376 is subject to Phosphoserine. The segment covering 387–397 has biased composition (acidic residues); that stretch reads PVEEEEADADL. Residues 564 to 573 are compositionally biased toward basic and acidic residues; that stretch reads VKFDHNKESL. Acidic residues predominate over residues 584 to 593; sequence TEEDEVEEQH. The segment covering 605 to 619 has biased composition (basic residues); sequence QNKKPSKKQRKRNKK. Polar residues predominate over residues 658-671; that stretch reads YSECNDSSVGSGAS. The segment covering 761–775 has biased composition (basic residues); it reads KKNQKRRDLKLRAQQ. A Phosphoserine modification is found at Ser-779.

This sequence belongs to the PIH1 family. Kintoun subfamily. As to quaternary structure, interacts with Pp1alpha-96A, Pp1-87B, Pp1-13C and flw.

It is found in the cytoplasm. Required for cytoplasmic pre-assembly of axonemal dyneins, thereby playing a central role in motility in cilia and flagella. Involved in pre-assembly of dynein arm complexes in the cytoplasm before intraflagellar transport loads them for the ciliary compartment. The sequence is that of Protein kintoun from Drosophila ananassae (Fruit fly).